The primary structure comprises 2431 residues: Nucleoprotein TPR (2431 aa).

The segment at 1 to 48 (MTSGGSASRSGHRGVPMTSRGFDGSRRGSLRRAGARETASEAADGAAP) is disordered. The segment at 77-87 (AVLQQVLERPE) is sufficient for interaction with TPR. Residues 88 to 191 (LNKLPKSTQN…GIQSQFTRAK (104 aa)) are necessary for interaction with HSF1. Residues 98-444 (KLEKFLAEQQ…SATKRKGAIL (347 aa)) adopt a coiled-coil conformation. Residues Lys326, Lys386, and Lys419 each carry the N6-acetyllysine modification. Position 453 is a phosphoserine (Ser453). The stretch at 486–678 (EKQENKRINK…ESRQHQMQLV (193 aa)) forms a coiled coil. N6-acetyllysine is present on residues Lys502, Lys531, and Lys551. A necessary for association to the NPC region spans residues 511–587 (LKRQREEYER…LMELEEARGN (77 aa)). Phosphoserine is present on residues Ser596, Ser597, and Ser706. A coiled-coil region spans residues 736 to 1246 (STEAIEAKAA…IEKLSDKVVT (511 aa)). Lys787, Lys797, Lys822, and Lys829 each carry N6-acetyllysine. Over residues 989-998 (LASQSTQRTG) the composition is skewed to polar residues. Residues 989 to 1011 (LASQSTQRTGKGQPGDRDDVDDL) form a disordered region. Over residues 1002 to 1011 (PGDRDDVDDL) the composition is skewed to basic and acidic residues. A Phosphoserine modification is found at Ser1259. Coiled coils occupy residues 1289–1494 (EVAQ…LDAK) and 1547–1700 (VQEM…QRDE). A necessary for interaction with HSF1 region spans residues 1292–1394 (QVESLRYRQR…NAELSEKSGM (103 aa)). Basic and acidic residues predominate over residues 1689 to 1701 (EHQERHLEQRDEP). The interval 1689–1744 (EHQERHLEQRDEPQEPTNKAPEQQRQITLKTTPASGERGIASTSDPPTANIKPTPV) is disordered. Over residues 1703–1722 (EPTNKAPEQQRQITLKTTPA) the composition is skewed to polar residues. At Lys1760 the chain carries N6-acetyllysine. Residue Thr1762 is modified to Phosphothreonine. The segment covering 1873–1898 (SSPVERPSTSTAVFGTVSATPSSSLP) has biased composition (polar residues). The interval 1873–2193 (SSPVERPSTS…TPGIGGMQQH (321 aa)) is disordered. The interval 1882–1937 (STAVFGTVSATPSSSLPKRTREEEEDSTMEAGDQVSEDTVEMPLPKKLKMVTPVGT) is sufficient and essential for mediating its nuclear import. Acidic residues predominate over residues 1937–1951 (TEEEVMAEESTDGEA). Polar residues predominate over residues 1954–1963 (QAYNQDSQDS). Residue Ser1963 is modified to Phosphoserine. Over residues 1994 to 2005 (QSDQQTTSSQDG) the composition is skewed to low complexity. 2 stretches are compositionally biased toward acidic residues: residues 2016–2057 (DSDD…EDSN) and 2067–2088 (DGYE…ETEE). The segment covering 2100–2132 (ADSQNSGEGNTSAAESSFSQEVAREQQPTSASE) has biased composition (polar residues). Ser2102, Ser2105, Ser2116, Ser2118, and Ser2141 each carry phosphoserine. Omega-N-methylarginine is present on residues Arg2174 and Arg2179. Phosphothreonine is present on residues Thr2184 and Thr2205. Ser2223 carries the phosphoserine modification. At Arg2231 the chain carries Omega-N-methylarginine. The segment covering 2295-2312 (ESTTSDASEHASQSVPMV) has biased composition (polar residues). A disordered region spans residues 2295–2431 (ESTTSDASEH…RGGINRGNIN (137 aa)). Positions 2313–2325 (TTSTGTLSTTNET) are enriched in low complexity. The segment covering 2327–2340 (AGDDGDEVFVEAES) has biased composition (acidic residues). The segment covering 2341 to 2351 (EGISSEAGLEI) has biased composition (low complexity). Over residues 2353–2367 (SQQEEEPVQASDESD) the composition is skewed to acidic residues. Over residues 2368 to 2388 (LPSTSQDPPSSSSVDTSSSQP) the composition is skewed to low complexity. Residues Arg2411, Arg2413, and Arg2422 each carry the asymmetric dimethylarginine modification. Positions 2420–2431 (GGRGGINRGNIN) are enriched in gly residues.

Belongs to the TPR family. As to quaternary structure, homodimer. Part of the nuclear pore complex (NPC). Associates with the XPO1/CRM1-mediated nuclear export complex, the Importin alpha/Importin beta receptor and the dynein 1 complex. Interacts (via C-terminal domain) with the KPNB1; the interaction occurs in a RanGTP-dependent manner. Interacts (via C-terminal region and phosphorylated form) with MAPK1/ERK2 (via phosphorylated form); the interaction requires dimerization of MAPK1/ERK2 and increases following EGF stimulation. Interacts with MAPK3/ERK1; the interaction increases following EGF stimulation. Interacts (via coiled coil region) with NUP153; the interaction is direct. Interacts with HSF1; the interaction increases in a stress-responsive manner and stimulates export of stress-induced HSP70 mRNA. Interacts with huntingtin/HTT; the interaction is inhibited by aggregated huntingtin/HTT forms with expanded polyglutamine stretch. Interacts with MAD1L1 (via N-terminal region), MAD2L1, and TTK; the interactions occurs in a microtubule-independent manner. Interacts (via middle region) with DYNLL1. Interacts with DCTN1, dynein, NUP153 and tubulin. Interacts with MTA1. Interacts with IFI204 (via C-terminal region). Interacts with IFI203. Interacts with ZC3HC1; this interaction mediates ZC3HC1 nuclear envelopes (NE)-association but also required for proper positioning of a substantial amount of TPR at the nuclear basket (NB). Phosphorylated. Phosphorylation occurs on serine and threonine residues (comprised in the C-terminal region) by MAPK1/ERK2 and stabilizes the interaction between these two proteins. Expressed in the heart, liver, kidney, spleen, lung and skeletal muscles.

It is found in the nucleus. The protein resides in the nucleus membrane. It localises to the nucleus envelope. Its subcellular location is the nuclear pore complex. The protein localises to the cytoplasm. It is found in the cytoskeleton. The protein resides in the spindle. It localises to the chromosome. Its subcellular location is the centromere. The protein localises to the kinetochore. Functionally, component of the nuclear pore complex (NPC), a complex required for the trafficking across the nuclear envelope. Functions as a scaffolding element in the nuclear phase of the NPC essential for normal nucleocytoplasmic transport of proteins and mRNAs, plays a role in the establishment of nuclear-peripheral chromatin compartmentalization in interphase, and in the mitotic spindle checkpoint signaling during mitosis. Involved in the quality control and retention of unspliced mRNAs in the nucleus; in association with NUP153, regulates the nuclear export of unspliced mRNA species bearing constitutive transport element (CTE) in a NXF1- and KHDRBS1-independent manner. Negatively regulates both the association of CTE-containing mRNA with large polyribosomes and translation initiation. Does not play any role in Rev response element (RRE)-mediated export of unspliced mRNAs. Implicated in nuclear export of mRNAs transcribed from heat shock gene promoters; associates both with chromatin in the HSP70 promoter and with mRNAs transcribed from this promoter under stress-induced conditions. Plays a limited role in the regulation of nuclear protein export. Modulates the nucleocytoplasmic transport of activated MAPK1/ERK2 and huntingtin/HTT and may serve as a docking site for the XPO1/CRM1-mediated nuclear export complex. Also plays a role as a structural and functional element of the perinuclear chromatin distribution; involved in the formation and/or maintenance of NPC-associated perinuclear heterochromatin exclusion zones (HEZs). Finally, acts as a spatial regulator of the spindle-assembly checkpoint (SAC) response ensuring a timely and effective recruitment of spindle checkpoint proteins like MAD1L1 and MAD2L1 to unattached kinetochore during the metaphase-anaphase transition before chromosome congression. Its N-terminus is involved in activation of oncogenic kinases. The polypeptide is Nucleoprotein TPR (Mus musculus (Mouse)).